The following is a 372-amino-acid chain: DNA replication and repair protein RecF (372 aa).

G30–T37 is an ATP binding site.

This sequence belongs to the RecF family.

The protein resides in the cytoplasm. The RecF protein is involved in DNA metabolism; it is required for DNA replication and normal SOS inducibility. RecF binds preferentially to single-stranded, linear DNA. It also seems to bind ATP. The sequence is that of DNA replication and repair protein RecF from Anaeromyxobacter sp. (strain K).